The primary structure comprises 306 residues: Protein YIPF1 (306 aa).

Topologically, residues 1-119 (MAAVDDLQFE…VRLYIRSNPD (119 aa)) are cytoplasmic. The disordered stretch occupies residues 30–63 (IEDPSVSFGHQPRPPGSVGREEDEELLGNNDSDE). The span at 50 to 63 (EEDEELLGNNDSDE) shows a compositional bias: acidic residues. A helical transmembrane segment spans residues 120–140 (LYGPFWICATLVFAIAISGNL). The Lumenal portion of the chain corresponds to 141–162 (SNFLIHLGEKTYHYVPEFQKVS). Residues 163–183 (IAATVIYAYAWLVPLALWGFL) traverse the membrane as a helical segment. The Cytoplasmic segment spans residues 184-200 (LWRNSKVMSMVSYSFLE). The chain crosses the membrane as a helical span at residues 201 to 221 (IVCVYGYSLFIYIPTAVLWII). Topologically, residues 222–227 (PQRVVR) are lumenal. The helical transmembrane segment at 228-248 (WVLVMIALGVSGSVLVMTFWP) threads the bilayer. The Cytoplasmic segment spans residues 249-256 (AVREDNRR). Residues 257 to 277 (VALATIVTIVLLHVLLSVGCL) traverse the membrane as a helical segment. Residues 278-306 (AYFFDAPEMDHLPAAITTPNQTVTAAKSS) are Lumenal-facing. N-linked (GlcNAc...) asparagine glycosylation is present at asparagine 297.

This sequence belongs to the YIP1 family. Interacts with YIPF6; this interaction may stabilize YIPF1. May also form a ternary complex with YIPF2 and YIPF6.

The protein resides in the golgi apparatus. Its subcellular location is the cis-Golgi network membrane. The protein localises to the trans-Golgi network membrane. It is found in the late endosome membrane. This Mus musculus (Mouse) protein is Protein YIPF1 (Yipf1).